The following is a 61-amino-acid chain: Small ribosomal subunit protein uS14B (61 aa).

Cys-24, Cys-27, Cys-40, and Cys-43 together coordinate Zn(2+).

This sequence belongs to the universal ribosomal protein uS14 family. Zinc-binding uS14 subfamily. Part of the 30S ribosomal subunit. Contacts proteins S3 and S10. It depends on Zn(2+) as a cofactor.

In terms of biological role, binds 16S rRNA, required for the assembly of 30S particles and may also be responsible for determining the conformation of the 16S rRNA at the A site. The polypeptide is Small ribosomal subunit protein uS14B (Nocardia farcinica (strain IFM 10152)).